Consider the following 287-residue polypeptide: Probable endoribonuclease YicC (287 aa).

It belongs to the YicC/YloC family. It depends on a divalent metal cation as a cofactor.

Probably a ssRNA endonuclease. In terms of biological role, might contribute to small RNA (sRNA) regulation. This Haemophilus influenzae (strain ATCC 51907 / DSM 11121 / KW20 / Rd) protein is Probable endoribonuclease YicC.